A 454-amino-acid polypeptide reads, in one-letter code: Bifunctional protein GlmU (454 aa).

Residues 1 to 226 (MSLNVVILAA…AIEVEGANNR (226 aa)) are pyrophosphorylase. UDP-N-acetyl-alpha-D-glucosamine-binding positions include 8-11 (LAAG), Lys-22, Gln-73, 78-79 (GT), 100-102 (YGD), Gly-137, Glu-151, Asn-166, and Asn-224. Asp-102 is a binding site for Mg(2+). Residue Asn-224 participates in Mg(2+) binding. The linker stretch occupies residues 227-247 (VQLAQLERAYQARAAEKMMLE). An N-acetyltransferase region spans residues 248 to 454 (GANLRDPARI…GWQRPIKIKK (207 aa)). Residues Arg-330 and Lys-348 each coordinate UDP-N-acetyl-alpha-D-glucosamine. Residue His-360 is the Proton acceptor of the active site. Residues Tyr-363 and Asn-374 each coordinate UDP-N-acetyl-alpha-D-glucosamine. Residues Ala-377, 383 to 384 (NY), Ser-402, Ala-420, and Arg-437 contribute to the acetyl-CoA site.

It in the N-terminal section; belongs to the N-acetylglucosamine-1-phosphate uridyltransferase family. The protein in the C-terminal section; belongs to the transferase hexapeptide repeat family. As to quaternary structure, homotrimer. Mg(2+) serves as cofactor.

It localises to the cytoplasm. It carries out the reaction alpha-D-glucosamine 1-phosphate + acetyl-CoA = N-acetyl-alpha-D-glucosamine 1-phosphate + CoA + H(+). The enzyme catalyses N-acetyl-alpha-D-glucosamine 1-phosphate + UTP + H(+) = UDP-N-acetyl-alpha-D-glucosamine + diphosphate. The protein operates within nucleotide-sugar biosynthesis; UDP-N-acetyl-alpha-D-glucosamine biosynthesis; N-acetyl-alpha-D-glucosamine 1-phosphate from alpha-D-glucosamine 6-phosphate (route II): step 2/2. It functions in the pathway nucleotide-sugar biosynthesis; UDP-N-acetyl-alpha-D-glucosamine biosynthesis; UDP-N-acetyl-alpha-D-glucosamine from N-acetyl-alpha-D-glucosamine 1-phosphate: step 1/1. Its pathway is bacterial outer membrane biogenesis; LPS lipid A biosynthesis. Functionally, catalyzes the last two sequential reactions in the de novo biosynthetic pathway for UDP-N-acetylglucosamine (UDP-GlcNAc). The C-terminal domain catalyzes the transfer of acetyl group from acetyl coenzyme A to glucosamine-1-phosphate (GlcN-1-P) to produce N-acetylglucosamine-1-phosphate (GlcNAc-1-P), which is converted into UDP-GlcNAc by the transfer of uridine 5-monophosphate (from uridine 5-triphosphate), a reaction catalyzed by the N-terminal domain. This is Bifunctional protein GlmU from Shewanella frigidimarina (strain NCIMB 400).